Reading from the N-terminus, the 576-residue chain is Zinc finger protein 791 (576 aa).

Positions 4–90 (VAFKDVSVSF…AETFSPNLSV (87 aa)) constitute a KRAB domain. 17 consecutive C2H2-type zinc fingers follow at residues 100 to 122 (YECTICGKVFMRLSSLTRHMRSH), 132 to 154 (YKCKECGKAFSYLKSFQRHERSH), 160 to 182 (YKCKQCGKTFIYHQPFQRHEQTH), 188 to 210 (YECKQCGKALSCSSSLRVHERIH), 216 to 238 (YECKQCGKAFSCSSSIRVHERTH), 244 to 266 (YACKECGKAFISHTSVLTHMITH), 272 to 294 (YKCKECGKAFIFPSFLRVHERIH), 300 to 322 (YTCKQCGKAFRCSTSIQIHERIH), 328 to 350 (YKCKECGKSFSARPAFRVHVRVH), 356 to 378 (YKCKECGKAFSRISYFRIHERTH), 384 to 406 (YECKKCGKTFNYPLDLQIHKRNH), 412 to 434 (YECKECAKTFISLENFRRHMITH), 440 to 462 (YKCRDCGKVFIFPSALRTHERTH), 468 to 490 (YECKQCGKAFSCSSYIRIHKRTH), 496 to 518 (YECKECGKAFIYPTSFQGHMRMH), 524 to 546 (YKCKECGKAFSLHSSFQRHTRIH), and 552 to 574 (LECKQCGKAFSLSTSLKKHMRMH).

It belongs to the krueppel C2H2-type zinc-finger protein family.

Its subcellular location is the nucleus. May be involved in transcriptional regulation. This is Zinc finger protein 791 (ZNF791) from Pongo abelii (Sumatran orangutan).